The chain runs to 818 residues: Sodium/hydrogen exchanger 1 (818 aa).

At Met1–His98 the chain is on the extracellular side. The interval Pro39–His76 is disordered. Asn75 carries N-linked (GlcNAc...) asparagine glycosylation. A helical transmembrane segment spans residues Val99–Val121. Topologically, residues Ile122–Pro130 are cytoplasmic. Residues Glu131–Ala148 form a helical membrane-spanning segment. Residues Val149–Ser158 lie on the Extracellular side of the membrane. The chain crosses the membrane as a helical span at residues Glu159–Phe176. Topologically, residues Leu177–Leu186 are cytoplasmic. Residues Gly187–Gly215 form a helical membrane-spanning segment. The Extracellular portion of the chain corresponds to Gly216–Ile222. Residues Gly223–Ile249 traverse the membrane as a helical segment. Over His250–Asn252 the chain is Cytoplasmic. A helical transmembrane segment spans residues Glu253–Tyr283. The Extracellular portion of the chain corresponds to Asp284–Gly287. The chain crosses the membrane as a helical span at residues Ile288 to Phe322. Topologically, residues Thr323–Val328 are cytoplasmic. The helical transmembrane segment at Ile329 to Ala341 threads the bilayer. At Tyr342–Leu350 the chain is on the extracellular side. Residues Ser351–Ile371 traverse the membrane as a helical segment. The Cytoplasmic portion of the chain corresponds to Ser372–His373. A helical transmembrane segment spans residues Lys374 to Ala404. Over Gly405 to Asn410 the chain is Extracellular. The helical transmembrane segment at Trp411–Lys438 threads the bilayer. At Phe439 to Leu444 the chain is on the cytoplasmic side. The helical transmembrane segment at Thr445–Leu469 threads the bilayer. At Asp470–Pro475 the chain is on the extracellular side. Residues Met476–Leu505 traverse the membrane as a helical segment. The interval Val503–His545 is interaction with TESC. Residues Leu506–Gln818 lie on the Cytoplasmic side of the membrane. The interval Lys509–Arg516 is PI(4,5)P2-binding region. The interaction with CHP2 stretch occupies residues Lys515–His545. A confers pH-dependent PI(4,5)P2 binding region spans residues His540–His545. Residues Arg552–Lys560 are PI(4,5)P2-binding region. Ser599 and Ser602 each carry phosphoserine. Thr603 is subject to Phosphothreonine. Phosphoserine is present on residues Ser605 and Ser648. Residues Lys633–Gln818 form an interaction with TESC region. The segment at Lys633–Gln818 is interaction with CALM1. The interaction with PPP3CA stretch occupies residues Leu684–Pro687. 3 positions are modified to phosphoserine: Ser693, Ser697, and Ser703. Residues Pro715–Asp720 are interaction with PPP3CA. Residues Ser723, Ser726, and Ser729 each carry the phosphoserine modification. A disordered region spans residues Gly739–Gln818. Residues Thr752 and Thr782 each carry the phosphothreonine modification. The span at Pro785 to Ile794 shows a compositional bias: polar residues. Phosphoserine is present on residues Ser788, Ser790, and Ser799.

Belongs to the monovalent cation:proton antiporter 1 (CPA1) transporter (TC 2.A.36) family. Homodimer; dimerization is crucial for its function. Oligomer. Interacts with CALM in a calcium-dependent manner. Interacts with TESC. Interacts (via the juxtamembrane region of the cytoplasmic C-terminal domain) with CHP1; the interaction occurs at the plasma membrane in a calcium-dependent manner. Interacts with CHP2; the interaction occurs in a calcium-dependent manner. Interacts with EZR; regulates the cytoskeletal interactions of SLC9A1 and promotes stress fiber formation. In terms of processing, ubiquitinated, leading to its degradation by the proteasome. Ubiquitination is reduced by CHP1. Post-translationally, O-glycosylated. Palmitoylated; may play a major role in SLC9A1 regulation. In terms of processing, phosphorylation at Thr-782 increases SLC9A1 activity. Specifically dephosphorylated at Thr-782 by PPP3CA that negatively regulates SLC9A1 activity. Phosphorylation at Ser-648 by AKT1 reduces SLC9A1 binding to CALM1.

The protein resides in the cell membrane. The protein localises to the basolateral cell membrane. It catalyses the reaction Na(+)(in) + H(+)(out) = Na(+)(out) + H(+)(in). The enzyme catalyses Li(+)(out) + H(+)(in) = Li(+)(in) + H(+)(out). The catalysed reaction is Li(+)(in) + Na(+)(out) = Li(+)(out) + Na(+)(in). With respect to regulation, activated at acidic pHs. Inhibited by cariporide and eniporide. Inhibited by amiloride and 5-amino-substituted derivatives. Phosphatidylinositol 4,5-bisphosphate (PI(4,5)P2) and phosphatidylinositol 3,4,5-trisphosphate (PI(3,4,5)P3) bind and differentially regulate SLC9A1 activity. Electroneutral Na(+) /H(+) antiporter that extrudes Na(+) in exchange for external protons driven by the inward sodium ion chemical gradient, protecting cells from acidification that occurs from metabolism. Exchanges intracellular H(+) ions for extracellular Na(+) in 1:1 stoichiometry. Plays a key role in maintening intracellular pH neutral and cell volume, and thus is important for cell growth, proliferation, migration and survival. In addition, can transport lithium Li(+) and also functions as a Na(+)/Li(+) antiporter. SLC9A1 also functions in membrane anchoring and organization of scaffolding complexes that coordinate signaling inputs. This chain is Sodium/hydrogen exchanger 1 (SLC9A1), found in Sus scrofa (Pig).